A 53-amino-acid chain; its full sequence is Abaecin (53 aa).

Residues 1 to 19 (MKVVIFIFALLATICAAFA) form the signal peptide.

The protein resides in the secreted. Functionally, this peptide has bactericidal activity. The sequence is that of Abaecin from Apis mellifera (Honeybee).